A 196-amino-acid polypeptide reads, in one-letter code: MTKVHPKFPSTCEESLCDSKAAVVLTVWKKSLLFNCDGFTVYNANGELVFRVDNYMNCPRDNIVLMDASGFPLLSIRRKKLSLGDCWMVYDGETERDPIFTARKNVSIISNRKSLAWVSAKKTVLYEIEGSYGQRSCKILDERRNKKKTAEIKRKETVIGGVAFGKDVYKLIVESEMEPRVAMALTIILDQMFRSS.

It belongs to the LOR family.

In terms of biological role, might be related to the phospholipid scramblase and tubby-like superfamily of membrane tethered transcription factors. The chain is Protein LURP-one-related 8 from Arabidopsis thaliana (Mouse-ear cress).